The sequence spans 115 residues: Large ribosomal subunit protein P2z (115 aa).

The disordered stretch occupies residues 62–115; the sequence is LASVPSGGGGGVAVASATSGGGGGGGAPAAESKKEEKKEEKEESDDDMGFSLFE. Positions 92 to 102 are enriched in basic and acidic residues; it reads ESKKEEKKEEK. Ser-105 is modified (phosphoserine).

It belongs to the eukaryotic ribosomal protein P1/P2 family. As to quaternary structure, P1 and P2 exist as dimers at the large ribosomal subunit. In terms of processing, phosphorylated.

Its function is as follows. Plays an important role in the elongation step of protein synthesis. This chain is Large ribosomal subunit protein P2z (RPP2A), found in Arabidopsis thaliana (Mouse-ear cress).